The sequence spans 276 residues: Ribosomal RNA small subunit methyltransferase A (276 aa).

Residues Asn-27, Leu-29, Gly-54, Glu-75, Asp-101, and Asn-123 each coordinate S-adenosyl-L-methionine.

Belongs to the class I-like SAM-binding methyltransferase superfamily. rRNA adenine N(6)-methyltransferase family. RsmA subfamily.

It localises to the cytoplasm. It catalyses the reaction adenosine(1518)/adenosine(1519) in 16S rRNA + 4 S-adenosyl-L-methionine = N(6)-dimethyladenosine(1518)/N(6)-dimethyladenosine(1519) in 16S rRNA + 4 S-adenosyl-L-homocysteine + 4 H(+). Its function is as follows. Specifically dimethylates two adjacent adenosines (A1518 and A1519) in the loop of a conserved hairpin near the 3'-end of 16S rRNA in the 30S particle. May play a critical role in biogenesis of 30S subunits. This chain is Ribosomal RNA small subunit methyltransferase A, found in Bartonella bacilliformis (strain ATCC 35685 / KC583 / Herrer 020/F12,63).